We begin with the raw amino-acid sequence, 198 residues long: MKEFIIKANKAVTNGEINLKDLPGSSGRLDLLCRCVNSAFFLSHDMRRDTIFYSVNYGSPNPPVALKFVGSELKRVSPDERSIALFIKKALEKDASDLWKESTSGIYSSKREFRDIISEKKSEGKRIFYLHLNGKPLEDFEFKDDEDFLFVLGDHIGIGDEDEEFLEELGAEKISLSPLELHADHCIILVHNILDRLK.

Residues Leu-130, Gly-153, 176 to 181, and Cys-186 contribute to the S-adenosyl-L-methionine site; that span reads LSPLEL.

The protein belongs to the methyltransferase superfamily. TrmY family. As to quaternary structure, homodimer.

It localises to the cytoplasm. It catalyses the reaction pseudouridine(54) in tRNA + S-adenosyl-L-methionine = N(1)-methylpseudouridine(54) in tRNA + S-adenosyl-L-homocysteine + H(+). Specifically catalyzes the N1-methylation of pseudouridine at position 54 (Psi54) in tRNAs. This chain is tRNA (pseudouridine(54)-N(1))-methyltransferase, found in Methanococcus maripaludis (strain C6 / ATCC BAA-1332).